Here is a 166-residue protein sequence, read N- to C-terminus: Transcriptional repressor NrdR (166 aa).

The segment at 3–34 (CPFCRNPDSRVVDSRMADDGSSIRRRRQCPEC) is a zinc-finger region. Residues 46 to 136 (LSVIKRSGVG…VYQAFESLED (91 aa)) form the ATP-cone domain.

The protein belongs to the NrdR family. Zn(2+) serves as cofactor.

Functionally, negatively regulates transcription of bacterial ribonucleotide reductase nrd genes and operons by binding to NrdR-boxes. The protein is Transcriptional repressor NrdR of Paenarthrobacter aurescens (strain TC1).